Here is a 1294-residue protein sequence, read N- to C-terminus: MKALDIDTILTQISNQQSLDKRYKRIKRLINNEQFCKNVILQKLVDSTKDIIENKVHGNILAATISLWTHAAEKHKEMSSDDRALLFNELSKVPNSEYYPATVDALIVITSQGERTESFSNDILKVLSEWLTDLFTIIDDMRAQSRKSFKGSAELRNYTRCFRQIILLLTNMFRVGFNLFDEMEVSSMLANCVWVSKSTTDEEDIALVFSLLNCIISYGRISSAVLYSIVEVVCRAKFGLVASSQSAQQIVEKLLKTATKYEALNSLKRIMEETDEGSYIAIMGGIQIVSALFTDIPRSVYCTRGMLLGFLQRSLKNKSSRIALETTRSLYNALERRSFVEVLYADEWISLLDLLVEISSSLPKSLNYRPGTWQHIEPNIIESIASYQLQHLLLFNEILKPDSNHFVLEKFHEFLKINFSYLTPTLSQKLFTVLDLRSQLPYSEGWLEDQTILLKSYFDTSFSLDFHVYLIGLFRKVLFACPVELRPEVYARMLCPLVKSLDKSSSEVIIDEVISLVCDLSWIYPSNVFHEVKDSLCFYAHNSSNGDLQLRSIQAIVSLTFYYVLLPEFKSVLYDGLVEISCDFKIRRTFRIPVLKLLLQLRINTNDYCFVNLSPAQLELISVYSTQWHNPFISEEAQRCRDNKVKDRDLSFSPVFQKFPLKVNTSATLSKDLMSLPINEWVKNVMYIVTHETDWKVVQYILINFTNQLRNTKMFTKTVEALQLLLNSLRDIINGKQSLNINFSDFFRIEDLLVSLSKILSVLMVYKDVLPPTAHEQFFQLLNRFAEKGDKTMESCIDTLITNCCAMQSFSIMHLPKFFSITMSSNLSERSLVNFLRLLHVVSDNWELNEGLEKETIQSICLFCLKVIRTKKEELDGHKKLVNPNTKVFCLYLVSFSYSIISNLFLGCETTERAQLASFLLKEFLNLKNGSHFEGYERVFYELLLRYTYSDERIESYPSDSRFHFNSSSKSWLYRGCVITINAEYETGDYQMILRRMSGTTIYRFWRNMRDRGAFEKSLMMEQSMVSSELKQKYLQEIAASHVFMETVLSPLDSPDEEPILIKPDARTEELIQSLDATHTKPVINIAVALQAGDVSDINTTVGWQLFYRLLESFGHEKKLDNGETIYVWQSKTIEMIFRYVSDPAEALESSLYSSLIIIGSDDLVGPDSLNWDSVDVPVIIKISLDSHLDALKMFDTLFHVKLEIITTGTDISHQSFWKLDQIISTNSIAPLLHSYLADIGLYQMIFENFAYVHPWLLRQQYIDTLYTIHQVPTTQRESSALPSDKTFDFTLFL.

This is an uncharacterized protein from Schizosaccharomyces pombe (strain 972 / ATCC 24843) (Fission yeast).